The chain runs to 407 residues: MEFSQHFQKLIDDMRLDGRYRTFAELERIAGEFPTALWHGPDGQARRVTVWCSNDYLGMGQNAEVLAAMHRSIDLSGAGTGGTRNISGTNRQHVALEAELADLHGKESALIFTSGWISNLAALGTLGKILPECAIFSDALNHNSMIEGIRRSGAERFIFHHNDPVHLDRLLSSVDPARPKIVAFESVYSMDGDIAPIAEICDVAERHGALTYLDEVHAVGLYGPRGGGISDRDGLADRVTIIEGTLAKAFGVMGGYVSGPSLLMDVIRSMSDSFIFTTSICPHLAAGALAAVRHVKAHPDERRRQAENAVRLKVLLQKAGLPVLDTPSHILPVMVGEAHLCRSISEALLARHAIYVQPINYPTVARGQERFRLTPTPFHTTSHMEALVEALLAVGRDLGWAMSRRAA.

Substrate-binding residues include R21 and S137. Residues S189, H217, and T245 each coordinate pyridoxal 5'-phosphate. Residue K248 is part of the active site. K248 is modified (N6-(pyridoxal phosphate)lysine). 2 residues coordinate pyridoxal 5'-phosphate: T277 and T278. Residue T363 coordinates substrate.

It belongs to the class-II pyridoxal-phosphate-dependent aminotransferase family. As to quaternary structure, homodimer. The cofactor is pyridoxal 5'-phosphate.

The catalysed reaction is succinyl-CoA + glycine + H(+) = 5-aminolevulinate + CO2 + CoA. The protein operates within porphyrin-containing compound metabolism; protoporphyrin-IX biosynthesis; 5-aminolevulinate from glycine: step 1/1. The protein is 5-aminolevulinate synthase 2 (hemT) of Cereibacter sphaeroides (strain ATCC 17023 / DSM 158 / JCM 6121 / CCUG 31486 / LMG 2827 / NBRC 12203 / NCIMB 8253 / ATH 2.4.1.) (Rhodobacter sphaeroides).